The primary structure comprises 328 residues: D-cysteine desulfhydrase (328 aa).

Residue lysine 51 is modified to N6-(pyridoxal phosphate)lysine.

Belongs to the ACC deaminase/D-cysteine desulfhydrase family. In terms of assembly, homodimer. Requires pyridoxal 5'-phosphate as cofactor.

It carries out the reaction D-cysteine + H2O = hydrogen sulfide + pyruvate + NH4(+) + H(+). Its function is as follows. Catalyzes the alpha,beta-elimination reaction of D-cysteine and of several D-cysteine derivatives. It could be a defense mechanism against D-cysteine. This Shigella boydii serotype 18 (strain CDC 3083-94 / BS512) protein is D-cysteine desulfhydrase.